Reading from the N-terminus, the 380-residue chain is Probable G-protein coupled receptor 132 (380 aa).

Residues 1-45 (MCPMLLKNGYNGNATPVTTTAPWASLGLSAKTCNNVSFEESRIVL) are Extracellular-facing. Asn35 carries N-linked (GlcNAc...) asparagine glycosylation. A helical transmembrane segment spans residues 46-68 (VVVYSAVCTLGVPANCLTAWLAL). At 69–79 (LQVLQGNVLAV) the chain is on the cytoplasmic side. The helical transmembrane segment at 80-102 (YLLCLALCELLYTGTLPLWVIYI) threads the bilayer. The Extracellular segment spans residues 103–116 (RNQHRWTLGLLACK). A disulfide bridge connects residues Cys115 and Cys186. A helical membrane pass occupies residues 117-138 (VTAYIFFCNIYVSILFLCCISC). The Cytoplasmic segment spans residues 139 to 158 (DRFVAVVYALESRGRRRRRT). A helical membrane pass occupies residues 159-178 (AILISACIFILVGIVHYPVF). Residues 179–197 (QTEDKETCFDMLQMDSRIA) are Extracellular-facing. The chain crosses the membrane as a helical span at residues 198-220 (GYYYARFTVGFAIPLSIIAFTNH). Topologically, residues 221–246 (RIFRSIKQSMGLSAAQKAKVKHSAIA) are cytoplasmic. A helical membrane pass occupies residues 247–269 (VVVIFLVCFAPYHLVLLVKAAAF). Over 270-288 (SYYRGDRNAMCGLEERLYT) the chain is Extracellular. Residues 289–311 (ASVVFLCLSTVNGVADPIIYVLA) traverse the membrane as a helical segment. Residues 312 to 380 (TDHSRQEVSR…PAKRLIEESC (69 aa)) lie on the Cytoplasmic side of the membrane.

This sequence belongs to the G-protein coupled receptor 1 family. In terms of tissue distribution, highly expressed in macrophages and hematopoietic tissues rich in lymphocytes, like spleen and thymus. Weakly expressed in heart and lung. In atherosclerotic plaques, expression is observed around the lipid core and at the shoulder region.

The protein localises to the cell membrane. Functionally, may be a receptor for oxidized free fatty acids derived from linoleic and arachidonic acids such as 9-hydroxyoctadecadienoic acid (9-HODE). Activates a G alpha protein, most likely G alpha(q). May be involved in apoptosis. Functions at the G2/M checkpoint to delay mitosis. May function as a sensor that monitors the oxidative states and mediates appropriate cellular responses such as secretion of paracrine signals and attenuation of proliferation. May mediate ths accumulation of intracellular inositol phosphates at acidic pH through proton-sensing activity. The polypeptide is Probable G-protein coupled receptor 132 (GPR132) (Homo sapiens (Human)).